A 137-amino-acid chain; its full sequence is Ribonuclease P protein component (137 aa).

This sequence belongs to the RnpA family. In terms of assembly, consists of a catalytic RNA component (M1 or rnpB) and a protein subunit.

It carries out the reaction Endonucleolytic cleavage of RNA, removing 5'-extranucleotides from tRNA precursor.. RNaseP catalyzes the removal of the 5'-leader sequence from pre-tRNA to produce the mature 5'-terminus. It can also cleave other RNA substrates such as 4.5S RNA. The protein component plays an auxiliary but essential role in vivo by binding to the 5'-leader sequence and broadening the substrate specificity of the ribozyme. In Porphyromonas gingivalis (strain ATCC 33277 / DSM 20709 / CIP 103683 / JCM 12257 / NCTC 11834 / 2561), this protein is Ribonuclease P protein component.